A 438-amino-acid chain; its full sequence is Phospholipase D Y (438 aa).

Positions 1–19 (MIINRLFIIIVLFFVNVNS) are cleaved as a signal peptide. N-linked (GlcNAc...) asparagine glycosylation is present at Asn50. The region spanning 145–172 (GSGVLHTKLIIIDESSAYVGSANADWSS) is the PLD phosphodiesterase 1 domain. Residues His150, Lys152, and Asp157 contribute to the active site. N-linked (GlcNAc...) asparagine glycans are attached at residues Asn223, Asn336, and Asn394. Residues 373–399 (YTRVNHAKFMVTEKQSYVGTSNWSQDY) enclose the PLD phosphodiesterase 2 domain.

It belongs to the phospholipase D family.

It carries out the reaction a 1,2-diacyl-sn-glycero-3-phosphocholine + H2O = a 1,2-diacyl-sn-glycero-3-phosphate + choline + H(+). Inhibited by butan-1-ol. Its function is as follows. Hydrolyzes membrane phospholipids, such as PtdCho (phosphatidylcholine), producing the free headgroup and PtdOH (phosphatidic acid; signaling molecule on its own). In Dictyostelium discoideum (Social amoeba), this protein is Phospholipase D Y (pldY).